We begin with the raw amino-acid sequence, 63 residues long: Large ribosomal subunit protein bL28 (63 aa).

The protein belongs to the bacterial ribosomal protein bL28 family.

The chain is Large ribosomal subunit protein bL28 from Symbiobacterium thermophilum (strain DSM 24528 / JCM 14929 / IAM 14863 / T).